The following is a 160-amino-acid chain: Large ribosomal subunit protein uL22c (160 aa).

This sequence belongs to the universal ribosomal protein uL22 family. Part of the 50S ribosomal subunit.

The protein resides in the plastid. It is found in the chloroplast. In terms of biological role, this protein binds specifically to 23S rRNA. Its function is as follows. The globular domain of the protein is located near the polypeptide exit tunnel on the outside of the subunit, while an extended beta-hairpin is found that lines the wall of the exit tunnel in the center of the 70S ribosome. This Capsella bursa-pastoris (Shepherd's purse) protein is Large ribosomal subunit protein uL22c (rpl22).